Consider the following 199-residue polypeptide: Large ribosomal subunit protein bL25 (199 aa).

Belongs to the bacterial ribosomal protein bL25 family. CTC subfamily. Part of the 50S ribosomal subunit; part of the 5S rRNA/L5/L18/L25 subcomplex. Contacts the 5S rRNA. Binds to the 5S rRNA independently of L5 and L18.

In terms of biological role, this is one of the proteins that binds to the 5S RNA in the ribosome where it forms part of the central protuberance. The protein is Large ribosomal subunit protein bL25 of Herpetosiphon aurantiacus (strain ATCC 23779 / DSM 785 / 114-95).